A 158-amino-acid polypeptide reads, in one-letter code: Ribonuclease H (158 aa).

The 142-residue stretch at 3–144 (ELKLIHIFTD…CDQLARAAAE (142 aa)) folds into the RNase H type-1 domain. Mg(2+)-binding residues include Asp-12, Glu-50, Asp-72, and Asp-136. The segment at 137-158 (QLARAAAEASPTQVDEGYQPES) is disordered.

It belongs to the RNase H family. Monomer. Requires Mg(2+) as cofactor.

The protein localises to the cytoplasm. The catalysed reaction is Endonucleolytic cleavage to 5'-phosphomonoester.. In terms of biological role, endonuclease that specifically degrades the RNA of RNA-DNA hybrids. The sequence is that of Ribonuclease H from Shewanella sp. (strain ANA-3).